Consider the following 501-residue polypeptide: Sucrose transport protein SUT2 (501 aa).

Residues 1–31 lie on the Cytoplasmic side of the membrane; sequence MPRRPSGGGGGAGPAAAAVRKVPLRKLLRAA. The helical transmembrane segment at 32-52 threads the bilayer; sequence SVACGVQFGWALQLSLLTPYV. At 53–55 the chain is on the extracellular side; that stretch reads QEL. Residues 56 to 76 form a helical membrane-spanning segment; it reads GIPHAFASLVWLCGPLSGLLV. At 77–98 the chain is on the cytoplasmic side; the sequence is QPLVGHLSDRIAPAASPLGRRR. A helical membrane pass occupies residues 99–119; that stretch reads PFIAAGAASIAAAVLTVGFSA. Residues 120–135 lie on the Extracellular side of the membrane; sequence DLGRIFGDSITPGSTR. Residues 136-156 traverse the membrane as a helical segment; sequence LGAIIVYLVGFWLLDVGNNAT. Over 157-176 the chain is Cytoplasmic; sequence QGPCRAFLADLTENDPRRTR. Residues 177–197 traverse the membrane as a helical segment; sequence IANAYFSLFMALGNILGYATG. The Extracellular segment spans residues 198–222; sequence AYSGWYKIFPFTVTPSCSISCANLK. A helical transmembrane segment spans residues 223 to 243; that stretch reads SAFLLDIIILVVTTCITVASV. At 244-278 the chain is on the cytoplasmic side; it reads QEPQSLGSDEADHPSTEQEAFLWELFGSFRYFTLP. The helical transmembrane segment at 279–299 threads the bilayer; that stretch reads VWMVLIVTALTWIGWFPFILF. Residues 300-327 lie on the Extracellular side of the membrane; that stretch reads DTDWMGREIYRGSPDDPSITQSYHDGVR. A helical transmembrane segment spans residues 328-348; sequence MGSFGLMLNSVLLGFTSIVLE. Over 349-356 the chain is Cytoplasmic; that stretch reads KLCRKWGA. Residues 357–377 form a helical membrane-spanning segment; the sequence is GLVWGVSNILMALCFVAMLVI. Over 378–394 the chain is Extracellular; the sequence is TYVAKNMDYPPSGVPPT. The chain crosses the membrane as a helical span at residues 395-415; the sequence is GIVIASLVVFTILGAPLAITY. Residues 416-433 lie on the Cytoplasmic side of the membrane; that stretch reads SIPYAMAASRVENLGLGQ. Residues 434-454 traverse the membrane as a helical segment; the sequence is GLAMGILNLAIVIPQVIVSLG. The Extracellular portion of the chain corresponds to 455–467; sequence SGPWDQLFGGGNA. A helical membrane pass occupies residues 468-488; sequence PAFAVAAAASFIGGLVAILGL. The Cytoplasmic portion of the chain corresponds to 489-501; sequence PRARIASRRRGHR.

Belongs to the glycoside-pentoside-hexuronide (GPH) cation symporter transporter (TC 2.A.2.4) family. As to quaternary structure, homodimer. In terms of tissue distribution, expressed in source leaf blades.

It localises to the cell membrane. It participates in glycan biosynthesis; sucrose metabolism. Functionally, responsible for the transport of sucrose into the cell, with the concomitant uptake of protons (symport system). May also transport other glucosides. This chain is Sucrose transport protein SUT2 (SUT2), found in Oryza sativa subsp. indica (Rice).